Reading from the N-terminus, the 905-residue chain is Respiratory burst oxidase homolog protein B (905 aa).

2 disordered regions span residues 1-46 (MADL…KTAR) and 69-134 (EVRG…VRKR). Residues 1–355 (MADLEAGMVA…MYFLEENWKR (355 aa)) lie on the Cytoplasmic side of the membrane. The span at 29–44 (IPNSGNLGSSNRSTKT) shows a compositional bias: polar residues. A compositionally biased stretch (gly residues) spans 75-84 (EGGSGHGTGF). Positions 91 to 108 (SPSSKSGKLTSKLRQVTN) are enriched in polar residues. EF-hand-like stretches follow at residues 172–180 (QVDGVLLRS) and 206–217 (RGIVKQVLTKDE). EF-hand domains lie at 229-264 (GFDNRLRTFFDMVDKNADGRLTAEEVKEIIALSASA) and 273-308 (RADEYTALIMEELDPTNLGYIEMEDLEALLLQSPSE). Ca(2+) is bound by residues D242, N244, D246, R248, and E253. Residues 356 to 376 (SWVMTLWISICIALFIWKFIQ) form a helical membrane-spanning segment. Topologically, residues 377-440 (YRNRAVFGIM…FNDNINFHKV (64 aa)) are extracellular. The Ferric oxidoreductase domain maps to 395 to 551 (GAAETLKFNM…HLFVIVYTLL (157 aa)). Residues 441-461 (IAAGVAVGVALHAGAHLTCDF) traverse the membrane as a helical segment. Residues 462–496 (PRLLHASDAQYELMKPFFGEKRPPNYWWFVKGTEG) are Cytoplasmic-facing. Residues 497–517 (WTGVVMVVLMAIAFTLAQPWF) form a helical membrane-spanning segment. The Extracellular segment spans residues 518–539 (RRNKLKDSNPLKKMTGFNAFWF). Residues 540 to 560 (THHLFVIVYTLLFVHGTCLYL) traverse the membrane as a helical segment. Residues 561-568 (SRKWYKKT) are Cytoplasmic-facing. Residues 569–586 (TWMYLAVPVVLYVSERIL) form a helical membrane-spanning segment. Positions 587 to 715 (RLFRSHDAVG…DGPYGAPAQD (129 aa)) constitute an FAD-binding FR-type domain. At 587–717 (RLFRSHDAVG…PYGAPAQDYR (131 aa)) the chain is on the extracellular side. The helical transmembrane segment at 718-738 (EYDVLLLIGLGIGATPLISIV) threads the bilayer. Topologically, residues 739-905 (KDVLNHIQGE…TRFDFHKENF (167 aa)) are cytoplasmic.

It belongs to the RBOH (TC 5.B.1.3) family. Monomer and homodimer, stabilized by swapping the EF-hand motifs. Interacts with GTP-bound RAC1.

The protein resides in the membrane. Its function is as follows. Calcium-dependent NADPH oxidase that generates superoxide. The chain is Respiratory burst oxidase homolog protein B (RBOHB) from Oryza sativa subsp. japonica (Rice).